Consider the following 184-residue polypeptide: Lysozyme 1 (184 aa).

The signal sequence occupies residues 1–20; sequence MNGLILFCAVVFATAVCTYG. The region spanning 69 to 184 is the I-type lysozyme domain; sequence TGMVSQQCLR…WRRVQAQGCN (116 aa). Cystine bridges form between C76/C152, C81/C87, C92/C101, C114/C134, C124/C130, and C148/C166. Catalysis depends on E84, which acts as the Proton donor. Residue D95 is the Nucleophile of the active site. 107-113 contacts substrate; it reads KRAYWID. Substrate contacts are provided by residues Y138 and 159–161; that span reads HNG.

Hemolymph, labial palps, non-vesiculated cells of mantle connective tissue, cells of interlamellar junctions and epithelia surrounding the water tubes of the gills.

The protein localises to the secreted. The enzyme catalyses Hydrolysis of (1-&gt;4)-beta-linkages between N-acetylmuramic acid and N-acetyl-D-glucosamine residues in a peptidoglycan and between N-acetyl-D-glucosamine residues in chitodextrins.. Its function is as follows. Has antibacterial activity against the Gram-positive bacteria L.garvieae, M.luteus and Enterococcus sp., and the Gram-negative bacteria E.coli and V.vulnificus. Weak antibacterial activity against the Gram-negative bacterium A.hydrophila. No antibacterial activity detected against the Gram-positive bacterium S.iniae or against the Gram-negative bacterium E.ictaluri. Shows some chitinase activity but no isopeptidase activity. This chain is Lysozyme 1, found in Crassostrea virginica (Eastern oyster).